The sequence spans 203 residues: Glycerol-3-phosphate acyltransferase (203 aa).

The next 6 helical transmembrane spans lie at 5–25, 50–70, 72–92, 115–135, 140–160, and 162–182; these read IASI…FSLL, TCGF…GALP, IAAQ…TAAM, VVLT…AVTF, ISAV…AVLL, and LGML…AIVF.

This sequence belongs to the PlsY family. Probably interacts with PlsX.

It localises to the cell membrane. It catalyses the reaction an acyl phosphate + sn-glycerol 3-phosphate = a 1-acyl-sn-glycero-3-phosphate + phosphate. It functions in the pathway lipid metabolism; phospholipid metabolism. Functionally, catalyzes the transfer of an acyl group from acyl-phosphate (acyl-PO(4)) to glycerol-3-phosphate (G3P) to form lysophosphatidic acid (LPA). This enzyme utilizes acyl-phosphate as fatty acyl donor, but not acyl-CoA or acyl-ACP. In Roseiflexus sp. (strain RS-1), this protein is Glycerol-3-phosphate acyltransferase.